Reading from the N-terminus, the 289-residue chain is Nucleotide-binding protein CHY_0272 (289 aa).

8-15 (GLSGAGKT) contributes to the ATP binding site. 59–62 (DVRG) serves as a coordination point for GTP.

It belongs to the RapZ-like family.

Displays ATPase and GTPase activities. The polypeptide is Nucleotide-binding protein CHY_0272 (Carboxydothermus hydrogenoformans (strain ATCC BAA-161 / DSM 6008 / Z-2901)).